Here is a 51-residue protein sequence, read N- to C-terminus: MFIFNLNKKESKMNEDRIKGQWKQLAGKIKERYGIAHDEARKQVKKFHDSL.

This sequence belongs to the UPF0337 (CsbD) family.

The chain is UPF0337 protein NE0131 from Nitrosomonas europaea (strain ATCC 19718 / CIP 103999 / KCTC 2705 / NBRC 14298).